The following is a 180-amino-acid chain: ATP synthase subunit delta (180 aa).

It belongs to the ATPase delta chain family. F-type ATPases have 2 components, F(1) - the catalytic core - and F(0) - the membrane proton channel. F(1) has five subunits: alpha(3), beta(3), gamma(1), delta(1), epsilon(1). F(0) has three main subunits: a(1), b(2) and c(10-14). The alpha and beta chains form an alternating ring which encloses part of the gamma chain. F(1) is attached to F(0) by a central stalk formed by the gamma and epsilon chains, while a peripheral stalk is formed by the delta and b chains.

Its subcellular location is the cell inner membrane. Its function is as follows. F(1)F(0) ATP synthase produces ATP from ADP in the presence of a proton or sodium gradient. F-type ATPases consist of two structural domains, F(1) containing the extramembraneous catalytic core and F(0) containing the membrane proton channel, linked together by a central stalk and a peripheral stalk. During catalysis, ATP synthesis in the catalytic domain of F(1) is coupled via a rotary mechanism of the central stalk subunits to proton translocation. This protein is part of the stalk that links CF(0) to CF(1). It either transmits conformational changes from CF(0) to CF(1) or is implicated in proton conduction. This is ATP synthase subunit delta from Acidovorax sp. (strain JS42).